The sequence spans 1576 residues: Protein Shroom (1576 aa).

Disordered regions lie at residues 1–31 (MKMRNHKENGNGSEMGESTKSLAKMEPENNN), 46–100 (SNGA…TQAG), 112–142 (YDQTAFHHQKQPSYAQSEGYHSYVSSSDSTS), 187–244 (RQSH…SSTE), 267–434 (ISES…ISVT), 589–609 (VERQQQQQKEEQQLLRPHSQS), and 621–660 (PNNLSPIMVGLPTGSNSASTRDCSSPTPPPPPRRSGSLLP). Residues 10 to 21 (GNGSEMGESTKS) show a composition bias toward polar residues. Low complexity-rich tracts occupy residues 46-69 (SNGANSRSSNSNASFSSASVAGSV), 76-91 (HNSSSSQLGQQHGSSL), and 128-142 (SEGYHSYVSSSDSTS). A compositionally biased stretch (basic residues) spans 189–211 (SHSHSHSHAHSHSNSHGHSHGHA). Composition is skewed to low complexity over residues 212 to 244 (HSASSSSSSNNNSNGSATNNNNNNSSESTSSTE) and 267 to 283 (ISESVSSSQRIVHSSRV). The span at 305-317 (DSSPTASNSSQMM) shows a compositional bias: polar residues. The segment covering 376–388 (QSTLSTQSSLLEL) has biased composition (low complexity). Over residues 399–415 (MGQSHSMGDLQQKNPHQ) the composition is skewed to polar residues. Serine 404 is modified (phosphoserine). The tract at residues 445-920 (APQPPAGKPS…LESNQQKRSN (476 aa)) is F-actin binding region required for planar polarity and cortical localization. Residues 633–643 (TGSNSASTRDC) show a composition bias toward polar residues. Phosphoserine is present on residues serine 667 and serine 668. Disordered stretches follow at residues 699–728 (ISFNDCGMPPPPPPPRGRLAVPTRRTSSAT), 743–823 (AALA…NCFA), 849–876 (VPKKPTSLQHKHLANGGGGSRKRPHHAT), 910–939 (NLESNQQKRSNSKASYLPRQSLEKLNNTDP), 1036–1055 (GYGKSSKPVTPQQYTRSQSY), 1091–1116 (PTATPTPTPTPTPTPPRLSPASSHSD), and 1210–1244 (SFANEPLMTPPLPPSPPPPLEPEEEEEQEENDVHD). The segment covering 748 to 759 (QQHHPQQHRHAQ) has biased composition (basic residues). Positions 798–816 (PLPPPPPPEVLQPRPPPSP) are enriched in pro residues. Composition is skewed to polar residues over residues 910-923 (NLESNQQKRSNSKA) and 1042-1055 (KPVTPQQYTRSQSY). Composition is skewed to pro residues over residues 1094-1108 (TPTPTPTPTPTPPRL) and 1217-1229 (MTPPLPPSPPPPL). The span at 1230-1239 (EPEEEEEQEE) shows a compositional bias: acidic residues. Residues 1232-1296 (EEEEEQEEND…LEAAREEHQT (65 aa)) are a coiled coil. Residues 1305 to 1572 (RQPIELDYEQ…QLSSLSDALV (268 aa)) form the ASD2 domain.

Belongs to the shroom family. In terms of assembly, monomer or homodimer. Interacts with Rok. Binds (via N-terminus) to F-actin.

The protein resides in the cell junction. Its subcellular location is the adherens junction. It localises to the cytoplasm. The protein localises to the cytoskeleton. It is found in the apical cell membrane. Its function is as follows. Binds to Rho-kinase Rok and targets it to the apical cell cortex where it mediates apical constriction. During embryogenic axis elongation, required for the localization to adherens junctions and the establishment of planar polarization of both Rho-kinase Rok and myosin regulatory light chain sqh. May be involved in the assembly of microtubule arrays during cell elongation. This chain is Protein Shroom, found in Drosophila melanogaster (Fruit fly).